We begin with the raw amino-acid sequence, 1053 residues long: CRISPR-associated endonuclease Cas9 (1053 aa).

The tract at residues 1–41 (MKRNYILGLDIGITSVGYGIIDYETRDVIDAGVRLFKEANV) is ruvC-I. Asp10 acts as the For RuvC-like nuclease domain in catalysis. Asp10 is a Mg(2+) binding site. Residues 41-426 (VENNEGRRSK…IFNRLKLVPK (386 aa)) form a recognition lobe region. The tract at residues 435 to 481 (EIPTTLVDDFILSPVVKRSFIQSIKVINAIIKKYGLPNDIIIELARE) is ruvC-II. Positions 477 and 481 each coordinate Mg(2+). One can recognise an HNH Cas9-type domain in the interval 480-646 (REKNSKDAQK…VQKDFINRNL (167 aa)). Catalysis depends on His557, which acts as the Proton acceptor for HNH nuclease domain. Residues 650-775 (RYATRGLMNL…FKDYKYSHRV (126 aa)) are ruvC-III. His701 lines the Mg(2+) pocket. Tyr789 serves as a coordination point for RNA. 2 PAM substrate-binding regions span residues 882 to 889 (YYGNKLNA) and 985 to 993 (NNDLLNRIE). The interval 910 to 1053 (KPYRFDVYLD…KKHPQIIKKG (144 aa)) is PAM-interacting domain (PI).

Belongs to the CRISPR-associated Cas9 family. Subtype II-A subfamily. In terms of assembly, monomer. Binds crRNA and tracrRNA. The cofactor is Mg(2+).

Its function is as follows. CRISPR (clustered regularly interspaced short palindromic repeat) is an adaptive immune system that provides protection against mobile genetic elements (viruses, transposable elements and conjugative plasmids). CRISPR clusters contain spacers, sequences complementary to antecedent mobile elements, and target invading nucleic acids. CRISPR clusters are transcribed and processed into CRISPR RNA (crRNA). In type II CRISPR systems correct processing of pre-crRNA requires a trans-encoded small RNA (tracrRNA), endogenous ribonuclease 3 (rnc) and this protein. The tracrRNA serves as a guide for ribonuclease 3-aided processing of pre-crRNA. Subsequently Cas9/crRNA/tracrRNA endonucleolytically cleaves linear or circular dsDNA target complementary to the spacer; Cas9 is inactive in the absence of the 2 guide RNAs (gRNA). Cas9 recognizes the protospacer adjacent motif (PAM) in the CRISPR repeat sequences to help distinguish self versus nonself, as targets within the bacterial CRISPR locus do not have PAMs. PAM recognition is also required for catalytic activity. The protein is CRISPR-associated endonuclease Cas9 of Staphylococcus aureus.